The primary structure comprises 245 residues: 1-(5-phosphoribosyl)-5-[(5-phosphoribosylamino)methylideneamino] imidazole-4-carboxamide isomerase (245 aa).

Asp7 (proton acceptor) is an active-site residue. The Proton donor role is filled by Asp129.

This sequence belongs to the HisA/HisF family.

Its subcellular location is the cytoplasm. The enzyme catalyses 1-(5-phospho-beta-D-ribosyl)-5-[(5-phospho-beta-D-ribosylamino)methylideneamino]imidazole-4-carboxamide = 5-[(5-phospho-1-deoxy-D-ribulos-1-ylimino)methylamino]-1-(5-phospho-beta-D-ribosyl)imidazole-4-carboxamide. The protein operates within amino-acid biosynthesis; L-histidine biosynthesis; L-histidine from 5-phospho-alpha-D-ribose 1-diphosphate: step 4/9. The polypeptide is 1-(5-phosphoribosyl)-5-[(5-phosphoribosylamino)methylideneamino] imidazole-4-carboxamide isomerase (Shigella boydii serotype 18 (strain CDC 3083-94 / BS512)).